A 107-amino-acid polypeptide reads, in one-letter code: MARVTVEDCLTNMDNRFQLVLVGSKRARQLANGAEAHVDWDNDKPTVVALREIADGHVGREILEEQPEPVLDFEAEASALMEEEAAKGNADAGQGEGDAPKTPGQDG.

Positions 81–107 are disordered; that stretch reads MEEEAAKGNADAGQGEGDAPKTPGQDG.

It belongs to the RNA polymerase subunit omega family. In terms of assembly, the RNAP catalytic core consists of 2 alpha, 1 beta, 1 beta' and 1 omega subunit. When a sigma factor is associated with the core the holoenzyme is formed, which can initiate transcription.

It carries out the reaction RNA(n) + a ribonucleoside 5'-triphosphate = RNA(n+1) + diphosphate. In terms of biological role, promotes RNA polymerase assembly. Latches the N- and C-terminal regions of the beta' subunit thereby facilitating its interaction with the beta and alpha subunits. This Alkalilimnicola ehrlichii (strain ATCC BAA-1101 / DSM 17681 / MLHE-1) protein is DNA-directed RNA polymerase subunit omega.